Here is a 737-residue protein sequence, read N- to C-terminus: Catalase-peroxidase (737 aa).

Positions 1–32 (MSKENMSNEGKCPFNHGAAGTNQSSGRGTSNK) are disordered. Over residues 20 to 32 (GTNQSSGRGTSNK) the composition is skewed to polar residues. Positions 103–226 (WHSAGTYRTA…LAAVQMGLIY (124 aa)) form a cross-link, tryptophyl-tyrosyl-methioninium (Trp-Tyr) (with M-252). Histidine 104 functions as the Proton acceptor in the catalytic mechanism. Residues 226–252 (YVNPEGPEGKPDTLASARDIRDTFGRM) constitute a cross-link (tryptophyl-tyrosyl-methioninium (Tyr-Met) (with W-103)). Histidine 267 contacts heme b.

It belongs to the peroxidase family. Peroxidase/catalase subfamily. In terms of assembly, homodimer or homotetramer. Heme b is required as a cofactor. Formation of the three residue Trp-Tyr-Met cross-link is important for the catalase, but not the peroxidase activity of the enzyme.

It catalyses the reaction H2O2 + AH2 = A + 2 H2O. It carries out the reaction 2 H2O2 = O2 + 2 H2O. Bifunctional enzyme with both catalase and broad-spectrum peroxidase activity. The chain is Catalase-peroxidase from Marinomonas sp. (strain MWYL1).